The following is a 160-amino-acid chain: Cytochrome b6-f complex subunit 4 (160 aa).

Helical transmembrane passes span 36 to 56, 95 to 115, and 131 to 151; these read LLYI…GLAV, LLGV…PFLE, and TVFL…TLPI.

It belongs to the cytochrome b family. PetD subfamily. As to quaternary structure, the 4 large subunits of the cytochrome b6-f complex are cytochrome b6, subunit IV (17 kDa polypeptide, petD), cytochrome f and the Rieske protein, while the 4 small subunits are petG, petL, petM and petN. The complex functions as a dimer.

It is found in the plastid. Its subcellular location is the chloroplast thylakoid membrane. In terms of biological role, component of the cytochrome b6-f complex, which mediates electron transfer between photosystem II (PSII) and photosystem I (PSI), cyclic electron flow around PSI, and state transitions. The sequence is that of Cytochrome b6-f complex subunit 4 from Spinacia oleracea (Spinach).